A 468-amino-acid polypeptide reads, in one-letter code: GDNF family receptor alpha-1 (468 aa).

The N-terminal stretch at 1 to 24 (MFLATLYFVLPLLDLLMSAEVSGG) is a signal peptide. Repeat copies occupy residues 25-113 (DRLD…LQGN), 150-238 (KGNN…YEER), and 239-342 (ERPN…KNAI). A disulfide bond links C36 and C42. N59 carries an N-linked (GlcNAc...) asparagine glycan. Cystine bridges form between C154–C214, C161–C167, C178–C192, C187–C233, C216–C221, C243–C313, C250–C256, C267–C285, C277–C337, and C315–C325. N-linked (GlcNAc...) asparagine glycans are attached at residues N347 and N406. S430 carries the GPI-anchor amidated serine lipid modification. The propeptide at 431–468 (HITTKSMAAPPSCGLSSLPVMVFTALAALLSVSLAETS) is removed in mature form.

The protein belongs to the GDNFR family. As to quaternary structure, interacts with GDNF ligand and RET: forms a 2:2:2 ternary complex composed of GDNF ligand, GFRA1 and RET receptor. Interacts with SORL1, either alone or in complex with GDNF. Interaction between SORL1 and GFRA1 leads to GFRA1 internalization, but not degradation. As to expression, expressed in the brain, in hippocampal neurons (at protein level). Isoform 1 and isoform 2 are expressed in heart, brain, lung, liver, kidney and testis.

It localises to the cell membrane. Its subcellular location is the golgi apparatus. The protein resides in the trans-Golgi network. It is found in the endosome. The protein localises to the multivesicular body. Coreceptor for GDNF, a neurotrophic factor that enhances survival and morphological differentiation of dopaminergic neurons and increases their high-affinity dopamine uptake. GDNF-binding leads to autophosphorylation and activation of the RET receptor. This chain is GDNF family receptor alpha-1 (Gfra1), found in Mus musculus (Mouse).